Reading from the N-terminus, the 896-residue chain is Alanine--tRNA ligase (896 aa).

4 residues coordinate Zn(2+): histidine 574, histidine 578, cysteine 677, and histidine 681.

The protein belongs to the class-II aminoacyl-tRNA synthetase family. It depends on Zn(2+) as a cofactor.

Its subcellular location is the cytoplasm. The enzyme catalyses tRNA(Ala) + L-alanine + ATP = L-alanyl-tRNA(Ala) + AMP + diphosphate. Its function is as follows. Catalyzes the attachment of alanine to tRNA(Ala) in a two-step reaction: alanine is first activated by ATP to form Ala-AMP and then transferred to the acceptor end of tRNA(Ala). Also edits incorrectly charged Ser-tRNA(Ala) and Gly-tRNA(Ala) via its editing domain. This chain is Alanine--tRNA ligase, found in Mycoplasma mycoides subsp. mycoides SC (strain CCUG 32753 / NCTC 10114 / PG1).